The following is a 243-amino-acid chain: Pyridoxine 5'-phosphate synthase (243 aa).

3-amino-2-oxopropyl phosphate is bound at residue Asn-9. Position 11-12 (11-12) interacts with 1-deoxy-D-xylulose 5-phosphate; sequence DH. Arg-20 contributes to the 3-amino-2-oxopropyl phosphate binding site. His-45 acts as the Proton acceptor in catalysis. Arg-47 and His-52 together coordinate 1-deoxy-D-xylulose 5-phosphate. The active-site Proton acceptor is the Glu-72. Position 102 (Thr-102) interacts with 1-deoxy-D-xylulose 5-phosphate. The active-site Proton donor is His-193. Residues Gly-194 and 215-216 contribute to the 3-amino-2-oxopropyl phosphate site; that span reads GH.

This sequence belongs to the PNP synthase family. In terms of assembly, homooctamer; tetramer of dimers.

Its subcellular location is the cytoplasm. The catalysed reaction is 3-amino-2-oxopropyl phosphate + 1-deoxy-D-xylulose 5-phosphate = pyridoxine 5'-phosphate + phosphate + 2 H2O + H(+). It functions in the pathway cofactor biosynthesis; pyridoxine 5'-phosphate biosynthesis; pyridoxine 5'-phosphate from D-erythrose 4-phosphate: step 5/5. In terms of biological role, catalyzes the complicated ring closure reaction between the two acyclic compounds 1-deoxy-D-xylulose-5-phosphate (DXP) and 3-amino-2-oxopropyl phosphate (1-amino-acetone-3-phosphate or AAP) to form pyridoxine 5'-phosphate (PNP) and inorganic phosphate. This chain is Pyridoxine 5'-phosphate synthase, found in Escherichia coli O6:H1 (strain CFT073 / ATCC 700928 / UPEC).